The following is a 129-amino-acid chain: Large ribosomal subunit protein bL20 (129 aa).

It belongs to the bacterial ribosomal protein bL20 family.

Binds directly to 23S ribosomal RNA and is necessary for the in vitro assembly process of the 50S ribosomal subunit. It is not involved in the protein synthesizing functions of that subunit. This Rhodococcus jostii (strain RHA1) protein is Large ribosomal subunit protein bL20.